Here is a 218-residue protein sequence, read N- to C-terminus: Peptide methionine sulfoxide reductase MsrA (218 aa).

The active site involves C54.

It belongs to the MsrA Met sulfoxide reductase family.

It catalyses the reaction L-methionyl-[protein] + [thioredoxin]-disulfide + H2O = L-methionyl-(S)-S-oxide-[protein] + [thioredoxin]-dithiol. The catalysed reaction is [thioredoxin]-disulfide + L-methionine + H2O = L-methionine (S)-S-oxide + [thioredoxin]-dithiol. Has an important function as a repair enzyme for proteins that have been inactivated by oxidation. Catalyzes the reversible oxidation-reduction of methionine sulfoxide in proteins to methionine. This is Peptide methionine sulfoxide reductase MsrA from Azorhizobium caulinodans (strain ATCC 43989 / DSM 5975 / JCM 20966 / LMG 6465 / NBRC 14845 / NCIMB 13405 / ORS 571).